Consider the following 126-residue polypeptide: Glycine cleavage system H protein (126 aa).

The 83-residue stretch at 22–104 (VAYVGITDYA…YGEGWLIKMK (83 aa)) folds into the Lipoyl-binding domain. Residue lysine 63 is modified to N6-lipoyllysine.

Belongs to the GcvH family. In terms of assembly, the glycine cleavage system is composed of four proteins: P, T, L and H. (R)-lipoate is required as a cofactor.

Its function is as follows. The glycine cleavage system catalyzes the degradation of glycine. The H protein shuttles the methylamine group of glycine from the P protein to the T protein. This Bacteroides fragilis (strain YCH46) protein is Glycine cleavage system H protein.